A 689-amino-acid chain; its full sequence is MANKEYPLAKFRNIGIMAHIDAGKTTATERILFYTGKTHKIGETHEGGATMDWMEQEQERGITITSAATTCFWKDHQVNIIDTPGHVDFTVEVERSLRVLDGAVTILDAKSGVEPQTETVWRQADNYKVPRMVFINKMDKLGADFLMSVGTLRERLHANAVPLQLPIGAEDAFSGIIDLVKNDAVIYKDDLGTVMDETEIPEDMKEMAEEYRTMLLEAVAEVDEDIMMKYLEGEEISVEEIKTALRKGVLANKIVPVLCGSAYKNKGVQLLLDAIIEFMPSPLDIEDVKGTEPTTGEEMTRPADAKAPLAALAFKIATDPFIGKLAFTRIYSGTMKNGTYVFNSNKGKRERIGRLMKMHANHREEVEELKAGDLGAIIGLKDTTTGDTLCDDADPIILENMEFPEPVIDVSIEPKTKAGQEKMGIALAKLAEEDPTFRTYTNQETGQTIIAGMGELHLEIIVDRLIREFKVECNVGQPQVAYKETVRKHVKAEGKFVRQSGGRGQYGHCWIEMMPTEGEYEFENAIVGGSIPKEYIPAIDNGIQEASQSGIIAGYPVINFKVKLFDGSYHDVDSSEMAFKIAGSMAFKNAMSKADAVLLEPSMKVEVVVPEEYMGDVIGDINSRRGRIEGMTPRAGAEVIRAFVPLSEMFGYATTLRSKTQGRGNYVMQFDHYEEVPKSIQDKVIGERK.

The 275-residue stretch at 9-283 (AKFRNIGIMA…AIIEFMPSPL (275 aa)) folds into the tr-type G domain. Residues 18-25 (AHIDAGKT), 82-86 (DTPGH), and 136-139 (NKMD) contribute to the GTP site.

It belongs to the TRAFAC class translation factor GTPase superfamily. Classic translation factor GTPase family. EF-G/EF-2 subfamily.

It is found in the cytoplasm. In terms of biological role, catalyzes the GTP-dependent ribosomal translocation step during translation elongation. During this step, the ribosome changes from the pre-translocational (PRE) to the post-translocational (POST) state as the newly formed A-site-bound peptidyl-tRNA and P-site-bound deacylated tRNA move to the P and E sites, respectively. Catalyzes the coordinated movement of the two tRNA molecules, the mRNA and conformational changes in the ribosome. The chain is Elongation factor G from Clostridium botulinum (strain 657 / Type Ba4).